We begin with the raw amino-acid sequence, 892 residues long: Putative leucine-rich repeat receptor-like serine/threonine-protein kinase At2g04300 (892 aa).

A signal peptide spans Met-1–Ala-26. The Extracellular portion of the chain corresponds to Gly-27 to Leu-523. Asn-99, Asn-186, Asn-241, Asn-267, and Asn-294 each carry an N-linked (GlcNAc...) asparagine glycan. LRR repeat units follow at residues Ile-375–Pro-396, Phe-399–Leu-422, Ser-423–Leu-444, and Ser-447–Val-467. 5 N-linked (GlcNAc...) asparagine glycosylation sites follow: Asn-407, Asn-421, Asn-437, Asn-450, and Asn-469. Residues Val-524–Phe-544 traverse the membrane as a helical segment. Residues Arg-545–Arg-892 are Cytoplasmic-facing. At Thr-573 the chain carries Phosphothreonine. Residues Asn-582 to Leu-855 form the Protein kinase domain. Residues Leu-588–Val-596 and Lys-610 each bind ATP. Tyr-655 is modified (phosphotyrosine). The active-site Proton acceptor is Asp-707. Thr-742 and Thr-747 each carry phosphothreonine. At Tyr-755 the chain carries Phosphotyrosine.

Belongs to the protein kinase superfamily. Ser/Thr protein kinase family.

It localises to the cell membrane. It catalyses the reaction L-seryl-[protein] + ATP = O-phospho-L-seryl-[protein] + ADP + H(+). The enzyme catalyses L-threonyl-[protein] + ATP = O-phospho-L-threonyl-[protein] + ADP + H(+). This is Putative leucine-rich repeat receptor-like serine/threonine-protein kinase At2g04300 from Arabidopsis thaliana (Mouse-ear cress).